A 297-amino-acid chain; its full sequence is ClpXP adapter protein SpxH (297 aa).

Belongs to the SpxH family. In terms of assembly, interacts with Spx.

It localises to the cytoplasm. In terms of biological role, adapter protein required for efficient degradation of Spx by ClpXP under non-stress conditions. Interaction with Spx stabilizes Spx and exposes the C-terminus of Spx for recognition and proteolysis by ClpXP. The chain is ClpXP adapter protein SpxH from Bacillus cereus (strain ATCC 14579 / DSM 31 / CCUG 7414 / JCM 2152 / NBRC 15305 / NCIMB 9373 / NCTC 2599 / NRRL B-3711).